The chain runs to 424 residues: UDP-N-acetylglucosamine 1-carboxyvinyltransferase (424 aa).

A phosphoenolpyruvate-binding site is contributed by 22–23 (KN). Arg-98 provides a ligand contact to UDP-N-acetyl-alpha-D-glucosamine. Residue Cys-122 is the Proton donor of the active site. Cys-122 is subject to 2-(S-cysteinyl)pyruvic acid O-phosphothioketal. UDP-N-acetyl-alpha-D-glucosamine contacts are provided by residues 127–131 (RPVDQ), Asp-312, and Ile-334.

It belongs to the EPSP synthase family. MurA subfamily.

Its subcellular location is the cytoplasm. The enzyme catalyses phosphoenolpyruvate + UDP-N-acetyl-alpha-D-glucosamine = UDP-N-acetyl-3-O-(1-carboxyvinyl)-alpha-D-glucosamine + phosphate. Its pathway is cell wall biogenesis; peptidoglycan biosynthesis. In terms of biological role, cell wall formation. Adds enolpyruvyl to UDP-N-acetylglucosamine. This chain is UDP-N-acetylglucosamine 1-carboxyvinyltransferase, found in Xanthomonas campestris pv. campestris (strain B100).